A 705-amino-acid chain; its full sequence is Polyribonucleotide nucleotidyltransferase (705 aa).

Positions 485 and 491 each coordinate Mg(2+). Residues 552–611 enclose the KH domain; it reads PKVFTMSINPSKIKDVIGAGGKTINKIIDETGVKIDIKEDGSVFVTAEDYESGKKALAMI. An S1 motif domain is found at 621–689; it reads GEVYLGKVTK…SMGRVNLSRK (69 aa).

Belongs to the polyribonucleotide nucleotidyltransferase family. It depends on Mg(2+) as a cofactor.

Its subcellular location is the cytoplasm. The enzyme catalyses RNA(n+1) + phosphate = RNA(n) + a ribonucleoside 5'-diphosphate. Involved in mRNA degradation. Catalyzes the phosphorolysis of single-stranded polyribonucleotides processively in the 3'- to 5'-direction. This is Polyribonucleotide nucleotidyltransferase from Clostridium novyi (strain NT).